A 261-amino-acid chain; its full sequence is uncharacterized protein (261 aa).

Residues isoleucine 33, aspartate 78, and asparagine 105 each contribute to the NADP(+) site. The Proton donor role is filled by serine 157. NADP(+)-binding residues include tyrosine 172, lysine 176, and serine 206. Tyrosine 172 acts as the Proton acceptor in catalysis. Lysine 176 acts as the Lowers pKa of active site Tyr in catalysis.

The protein belongs to the short-chain dehydrogenases/reductases (SDR) family.

It is found in the cytoplasm. The protein resides in the nucleus. This is an uncharacterized protein from Schizosaccharomyces pombe (strain 972 / ATCC 24843) (Fission yeast).